Consider the following 120-residue polypeptide: Ribonuclease P protein component (120 aa).

The protein belongs to the RnpA family. In terms of assembly, consists of a catalytic RNA component (M1 or rnpB) and a protein subunit.

The enzyme catalyses Endonucleolytic cleavage of RNA, removing 5'-extranucleotides from tRNA precursor.. In terms of biological role, RNaseP catalyzes the removal of the 5'-leader sequence from pre-tRNA to produce the mature 5'-terminus. It can also cleave other RNA substrates such as 4.5S RNA. The protein component plays an auxiliary but essential role in vivo by binding to the 5'-leader sequence and broadening the substrate specificity of the ribozyme. This chain is Ribonuclease P protein component, found in Dehalococcoides mccartyi (strain ATCC BAA-2266 / KCTC 15142 / 195) (Dehalococcoides ethenogenes (strain 195)).